The sequence spans 645 residues: ATP-dependent DNA helicase Rep (645 aa).

Residues 1–280 (MSLNFSQKNA…IKMEHNYRSS (280 aa)) form the UvrD-like helicase ATP-binding domain. ATP-binding positions include 22-29 (AGAGSGKT) and Arg-278. In terms of domain architecture, UvrD-like helicase C-terminal spans 281-562 (GRILKAANSL…QLMTLHASKG (282 aa)).

The protein belongs to the helicase family. UvrD subfamily. Homodimer.

It carries out the reaction Couples ATP hydrolysis with the unwinding of duplex DNA by translocating in the 3'-5' direction.. The catalysed reaction is ATP + H2O = ADP + phosphate + H(+). Functionally, rep helicase is a single-stranded DNA-dependent ATPase involved in DNA replication; it can initiate unwinding at a nick in the DNA. It binds to the single-stranded DNA and acts in a progressive fashion along the DNA in the 3' to 5' direction. This is ATP-dependent DNA helicase Rep from Buchnera aphidicola subsp. Acyrthosiphon pisum (strain APS) (Acyrthosiphon pisum symbiotic bacterium).